A 68-amino-acid polypeptide reads, in one-letter code: Large ribosomal subunit protein bL32 (68 aa).

Belongs to the bacterial ribosomal protein bL32 family.

The sequence is that of Large ribosomal subunit protein bL32 from Onion yellows phytoplasma (strain OY-M).